We begin with the raw amino-acid sequence, 145 residues long: Putative pre-16S rRNA nuclease (145 aa).

The protein belongs to the YqgF nuclease family.

It localises to the cytoplasm. In terms of biological role, could be a nuclease involved in processing of the 5'-end of pre-16S rRNA. The polypeptide is Putative pre-16S rRNA nuclease (Thiobacillus denitrificans (strain ATCC 25259 / T1)).